A 344-amino-acid chain; its full sequence is Anthranilate phosphoribosyltransferase (344 aa).

5-phospho-alpha-D-ribose 1-diphosphate contacts are provided by residues G80, 83–84, T88, 90–93, 108–116, and S120; these read GD, NVST, and KHGNRSVSS. An anthranilate-binding site is contributed by G80. S92 serves as a coordination point for Mg(2+). An anthranilate-binding site is contributed by N111. R166 contributes to the anthranilate binding site. Residues D225 and E226 each coordinate Mg(2+).

This sequence belongs to the anthranilate phosphoribosyltransferase family. In terms of assembly, homodimer. Mg(2+) serves as cofactor.

The catalysed reaction is N-(5-phospho-beta-D-ribosyl)anthranilate + diphosphate = 5-phospho-alpha-D-ribose 1-diphosphate + anthranilate. Its pathway is amino-acid biosynthesis; L-tryptophan biosynthesis; L-tryptophan from chorismate: step 2/5. In terms of biological role, catalyzes the transfer of the phosphoribosyl group of 5-phosphorylribose-1-pyrophosphate (PRPP) to anthranilate to yield N-(5'-phosphoribosyl)-anthranilate (PRA). In Legionella pneumophila (strain Paris), this protein is Anthranilate phosphoribosyltransferase.